The primary structure comprises 230 residues: MPNTSSSQSFTIFVDGWLIRHRYFVEQLMCASSLDETNRISLEEQQSLVAQFLSHCLQYYQEKFASVSLAGDNVFTFFCPPWFNSYAKLILWVGDFKPSLVFKLTEVSVADLTRHQKDRISSLKSETRRKEREVMRDFALVQQSVADPPVMLAARRVGAVGMVDGEETDLEEAMEVLKAGMAAAMNNADQLRCSTVGKVVEILTPPQAIKVLRTIGQLHLRLRDRDQERA.

Residues 7–230 (SQSFTIFVDG…RLRDRDQERA (224 aa)) form the DOG1 domain.

Negative regulator of salt (NaCl) tolerance probably by enhancing abscisic acid (ABA) sensitivity. This is Protein RESPONSE TO ABA AND SALT 1 from Arabidopsis thaliana (Mouse-ear cress).